The chain runs to 500 residues: NAD(P)H-quinone oxidoreductase chain 4, chloroplastic (500 aa).

Helical transmembrane passes span Phe4–Leu24, Ile37–Leu57, Ile87–Val107, Leu113–Ser130, Leu134–Met154, Phe167–Leu187, Ile211–His231, His242–Val262, Ala272–Ala292, Ile305–Asp325, Gly330–Gly350, Leu386–Thr406, Ile416–Met436, and Leu462–Val482.

Belongs to the complex I subunit 4 family.

The protein localises to the plastid. It is found in the chloroplast thylakoid membrane. The catalysed reaction is a plastoquinone + NADH + (n+1) H(+)(in) = a plastoquinol + NAD(+) + n H(+)(out). It catalyses the reaction a plastoquinone + NADPH + (n+1) H(+)(in) = a plastoquinol + NADP(+) + n H(+)(out). The polypeptide is NAD(P)H-quinone oxidoreductase chain 4, chloroplastic (Acorus calamus var. americanus (American sweet flag)).